Consider the following 101-residue polypeptide: Large ribosomal subunit protein uL24 (101 aa).

Belongs to the universal ribosomal protein uL24 family. Part of the 50S ribosomal subunit.

One of two assembly initiator proteins, it binds directly to the 5'-end of the 23S rRNA, where it nucleates assembly of the 50S subunit. Functionally, one of the proteins that surrounds the polypeptide exit tunnel on the outside of the subunit. The polypeptide is Large ribosomal subunit protein uL24 (Elusimicrobium minutum (strain Pei191)).